The following is a 122-amino-acid chain: Ribosome-binding factor A (122 aa).

It belongs to the RbfA family. As to quaternary structure, monomer. Binds 30S ribosomal subunits, but not 50S ribosomal subunits or 70S ribosomes.

The protein localises to the cytoplasm. One of several proteins that assist in the late maturation steps of the functional core of the 30S ribosomal subunit. Associates with free 30S ribosomal subunits (but not with 30S subunits that are part of 70S ribosomes or polysomes). Required for efficient processing of 16S rRNA. May interact with the 5'-terminal helix region of 16S rRNA. The protein is Ribosome-binding factor A of Polaromonas sp. (strain JS666 / ATCC BAA-500).